We begin with the raw amino-acid sequence, 309 residues long: Metal ABC transporter substrate-binding lipoprotein SsaB (309 aa).

The first 19 residues, 1 to 19, serve as a signal peptide directing secretion; sequence MKKLGFLSLLLLAVCTLFA. The N-palmitoyl cysteine moiety is linked to residue Cys-20. The S-diacylglycerol cysteine moiety is linked to residue Cys-20. Positions 67, 139, 205, and 280 each coordinate a divalent metal cation.

It belongs to the bacterial solute-binding protein 9 family. Lipoprotein receptor antigen (Lrai) subfamily. Homodimer and homotrimer.

The protein resides in the cell membrane. Functionally, part of an ATP-binding cassette (ABC) transport system involved in metal import. Binds a metal with high affinity and specificity and delivers it to the membrane permease for translocation into the cytoplasm. Also acts as an adhesin which is involved on adherence to extracellular matrix. It is an important factor in the pathogenesis and infection. May contribute to the formation and accumulation of dental plaque. The protein is Metal ABC transporter substrate-binding lipoprotein SsaB (ssaB) of Streptococcus sanguinis.